A 134-amino-acid chain; its full sequence is UPF0102 protein SYNW1051 (134 aa).

The protein belongs to the UPF0102 family.

The sequence is that of UPF0102 protein SYNW1051 from Parasynechococcus marenigrum (strain WH8102).